The primary structure comprises 302 residues: Dermonecrotic toxin LiSicTox-alphaIA1bii (302 aa).

The first 14 residues, 1–14 (ARVVLGCWSVLSQA), serve as a signal peptide directing secretion. The propeptide occupies 15-22 (AQTDDEER). The active site involves H34. E54 and D56 together coordinate Mg(2+). H70 functions as the Nucleophile in the catalytic mechanism. 2 cysteine pairs are disulfide-bonded: C74-C80 and C76-C219. D114 lines the Mg(2+) pocket.

It belongs to the arthropod phospholipase D family. Class II subfamily. Class IIa sub-subfamily. Mg(2+) serves as cofactor. Expressed by the venom gland.

The protein localises to the secreted. It carries out the reaction an N-(acyl)-sphingosylphosphocholine = an N-(acyl)-sphingosyl-1,3-cyclic phosphate + choline. The enzyme catalyses an N-(acyl)-sphingosylphosphoethanolamine = an N-(acyl)-sphingosyl-1,3-cyclic phosphate + ethanolamine. It catalyses the reaction a 1-acyl-sn-glycero-3-phosphocholine = a 1-acyl-sn-glycero-2,3-cyclic phosphate + choline. The catalysed reaction is a 1-acyl-sn-glycero-3-phosphoethanolamine = a 1-acyl-sn-glycero-2,3-cyclic phosphate + ethanolamine. Its function is as follows. Dermonecrotic toxins cleave the phosphodiester linkage between the phosphate and headgroup of certain phospholipids (sphingolipid and lysolipid substrates), forming an alcohol (often choline) and a cyclic phosphate. This toxin acts on sphingomyelin (SM). It may also act on ceramide phosphoethanolamine (CPE), lysophosphatidylcholine (LPC) and lysophosphatidylethanolamine (LPE), but not on lysophosphatidylserine (LPS), and lysophosphatidylglycerol (LPG). It acts by transphosphatidylation, releasing exclusively cyclic phosphate products as second products. Induces hemolysis, dermonecrosis, vascular permeability and platelet aggregation. This chain is Dermonecrotic toxin LiSicTox-alphaIA1bii, found in Loxosceles intermedia (Brown spider).